Here is a 184-residue protein sequence, read N- to C-terminus: Protein CPn_0803/CP_1068/CPj0803/CpB0832 (184 aa).

This sequence belongs to the chlamydial CPn_0803/CT_584/TC_0873 family.

The sequence is that of Protein CPn_0803/CP_1068/CPj0803/CpB0832 from Chlamydia pneumoniae (Chlamydophila pneumoniae).